The sequence spans 161 residues: Allophycocyanin beta subunit (161 aa).

Asn71 bears the N4-methylasparagine mark. Residue Cys81 participates in (2R,3E)-phycocyanobilin binding.

Belongs to the phycobiliprotein family. As to quaternary structure, heterodimer of an alpha and a beta chain. Contains one covalently linked phycocyanobilin chromophore. The chromophore is added by the phycocyanobilin lyase CpcUS.

It localises to the cellular thylakoid membrane. Light-harvesting photosynthetic bile pigment-protein from the phycobiliprotein complex. Allophycocyanin has a maximum absorption at approximately 650 nanometers. This is Allophycocyanin beta subunit (apcB) from Picosynechococcus sp. (strain ATCC 27264 / PCC 7002 / PR-6) (Agmenellum quadruplicatum).